A 204-amino-acid chain; its full sequence is Rho GDP-dissociation inhibitor 1 (204 aa).

Positions 1–36 are disordered; the sequence is MAEQEPTAEQLAQIAAENEEDEHSVNYKPPAQKSIQ. Position 2 is an N-acetylalanine (Ala-2). At Ser-34 the chain carries Phosphoserine. Lys-43 carries the post-translational modification N6-acetyllysine. Ser-47 carries the post-translational modification Phosphoserine. N6-acetyllysine occurs at positions 105 and 127. Glycyl lysine isopeptide (Lys-Gly) (interchain with G-Cter in SUMO1); alternate cross-links involve residues Lys-138 and Lys-141. Residues Lys-138 and Lys-141 each participate in a glycyl lysine isopeptide (Lys-Gly) (interchain with G-Cter in SUMO2); alternate cross-link. At Lys-141 the chain carries N6-acetyllysine; alternate. The residue at position 141 (Lys-141) is an N6-succinyllysine; alternate. At Lys-178 the chain carries N6-acetyllysine.

The protein belongs to the Rho GDI family. As to quaternary structure, monomer. Interacts with FER. Interacts with PLXNB3. Forms a heterodimer with RAC1. Interacts with RHOA, the affinity is increased by three orders of magnitude when RHOA is prenylated. Interacts with PSMD10; the interaction increases ARHGDIA association with RHOA, leading to ARHGDIA-mediated inactivation of RHOA and ROCK and prolonged AKT activation. Interacts with KANK2; the interaction is direct and may regulate the interaction of ARHGDIA with RHOA, RAC1 and CDC42. Interacts with RHOC. Interacts with CDC42. Interacts with NGFR (via death domain); NGFR binding decreases the affinity for RHOA. In terms of tissue distribution, in kidney glomerulus, expressed in podocytes and mesangial cells.

The protein resides in the cytoplasm. Functionally, controls Rho proteins homeostasis. Regulates the GDP/GTP exchange reaction of the Rho proteins by inhibiting the dissociation of GDP from them, and the subsequent binding of GTP to them. Retains Rho proteins such as CDC42, RAC1 and RHOA in an inactive cytosolic pool, regulating their stability and protecting them from degradation. Actively involved in the recycling and distribution of activated Rho GTPases in the cell, mediates extraction from membranes of both inactive and activated molecules due its exceptionally high affinity for prenylated forms. Through the modulation of Rho proteins, may play a role in cell motility regulation. In glioma cells, inhibits cell migration and invasion by mediating the signals of SEMA5A and PLXNB3 that lead to inactivation of RAC1. This chain is Rho GDP-dissociation inhibitor 1 (Arhgdia), found in Mus musculus (Mouse).